Reading from the N-terminus, the 352-residue chain is Glycerol-3-phosphate dehydrogenase 1-like protein (352 aa).

13-18 serves as a coordination point for NAD(+); the sequence is GSGNWG. Residue K123 coordinates substrate. A156 lines the NAD(+) pocket. Catalysis depends on K207, which acts as the Proton acceptor. Residues R272, K299, and Q301 each contribute to the NAD(+) site. 272 to 273 provides a ligand contact to substrate; the sequence is RN.

It belongs to the NAD-dependent glycerol-3-phosphate dehydrogenase family.

It localises to the cytoplasm. It catalyses the reaction sn-glycerol 3-phosphate + NAD(+) = dihydroxyacetone phosphate + NADH + H(+). Its function is as follows. Plays a role in regulating cardiac sodium current. The protein is Glycerol-3-phosphate dehydrogenase 1-like protein (gpd1l) of Xenopus tropicalis (Western clawed frog).